We begin with the raw amino-acid sequence, 162 residues long: NADH-quinone oxidoreductase subunit I (162 aa).

4Fe-4S ferredoxin-type domains follow at residues 53-83 and 93-122; these read LRRY…IESE and TRYD…ETHI. Residues C63, C66, C69, C73, C102, C105, C108, and C112 each contribute to the [4Fe-4S] cluster site.

This sequence belongs to the complex I 23 kDa subunit family. In terms of assembly, NDH-1 is composed of 14 different subunits. Subunits NuoA, H, J, K, L, M, N constitute the membrane sector of the complex. It depends on [4Fe-4S] cluster as a cofactor.

It is found in the cell inner membrane. The enzyme catalyses a quinone + NADH + 5 H(+)(in) = a quinol + NAD(+) + 4 H(+)(out). Its function is as follows. NDH-1 shuttles electrons from NADH, via FMN and iron-sulfur (Fe-S) centers, to quinones in the respiratory chain. The immediate electron acceptor for the enzyme in this species is believed to be ubiquinone. Couples the redox reaction to proton translocation (for every two electrons transferred, four hydrogen ions are translocated across the cytoplasmic membrane), and thus conserves the redox energy in a proton gradient. In Bordetella bronchiseptica (strain ATCC BAA-588 / NCTC 13252 / RB50) (Alcaligenes bronchisepticus), this protein is NADH-quinone oxidoreductase subunit I.